We begin with the raw amino-acid sequence, 299 residues long: 4-diphosphocytidyl-2-C-methyl-D-erythritol kinase (299 aa).

Lys-11 is an active-site residue. 94–104 lines the ATP pocket; it reads PQGGGLGGGSS. Asp-136 is a catalytic residue.

It belongs to the GHMP kinase family. IspE subfamily.

The catalysed reaction is 4-CDP-2-C-methyl-D-erythritol + ATP = 4-CDP-2-C-methyl-D-erythritol 2-phosphate + ADP + H(+). Its pathway is isoprenoid biosynthesis; isopentenyl diphosphate biosynthesis via DXP pathway; isopentenyl diphosphate from 1-deoxy-D-xylulose 5-phosphate: step 3/6. Its function is as follows. Catalyzes the phosphorylation of the position 2 hydroxy group of 4-diphosphocytidyl-2C-methyl-D-erythritol. This chain is 4-diphosphocytidyl-2-C-methyl-D-erythritol kinase, found in Bordetella bronchiseptica (strain ATCC BAA-588 / NCTC 13252 / RB50) (Alcaligenes bronchisepticus).